The sequence spans 400 residues: Methylamine dehydrogenase heavy chain (400 aa).

The signal sequence occupies residues 1-27 (MTTFQPGRLAGQLAATALLAATCSAFA).

It belongs to the aromatic amine dehydrogenase heavy chain family. In terms of assembly, tetramer of two light and two heavy chains.

The protein localises to the periplasm. It carries out the reaction 2 oxidized [amicyanin] + methylamine + H2O = 2 reduced [amicyanin] + formaldehyde + NH4(+) + 2 H(+). Its function is as follows. Methylamine dehydrogenase carries out the oxidation of methylamine. Electrons are passed from methylamine dehydrogenase to amicyanin. The polypeptide is Methylamine dehydrogenase heavy chain (mauB) (Methylobacillus flagellatus (strain ATCC 51484 / DSM 6875 / VKM B-1610 / KT)).